A 216-amino-acid chain; its full sequence is Phosphoenolpyruvate guanylyltransferase (216 aa).

The phosphoenolpyruvate site is built by Thr143, Gly159, and Ser162.

It belongs to the CofC family.

It catalyses the reaction phosphoenolpyruvate + GTP + H(+) = enolpyruvoyl-2-diphospho-5'-guanosine + diphosphate. The protein operates within cofactor biosynthesis; coenzyme F420 biosynthesis. In terms of biological role, guanylyltransferase that catalyzes the activation of phosphoenolpyruvate (PEP) as enolpyruvoyl-2-diphospho-5'-guanosine, via the condensation of PEP with GTP. It is involved in the biosynthesis of coenzyme F420, a hydride carrier cofactor. In Streptomyces scabiei (strain 87.22), this protein is Phosphoenolpyruvate guanylyltransferase.